The following is a 472-amino-acid chain: Serine/threonine-protein phosphatase T (472 aa).

TPR repeat units follow at residues 7–40, 41–73, and 74–107; these read ADKL…TKTP, TLFC…EPTF, and AKAY…APQN. Mn(2+) contacts are provided by aspartate 217, histidine 219, aspartate 246, and asparagine 278. The Proton donor/acceptor role is filled by histidine 279. Residues histidine 327 and histidine 403 each coordinate Mn(2+).

Belongs to the PPP phosphatase family. PP-5 (PP-T) subfamily. Mg(2+) is required as a cofactor. Mn(2+) serves as cofactor.

It is found in the cytoplasm. The protein resides in the cytosol. Its subcellular location is the nucleus. The catalysed reaction is O-phospho-L-seryl-[protein] + H2O = L-seryl-[protein] + phosphate. It catalyses the reaction O-phospho-L-threonyl-[protein] + H2O = L-threonyl-[protein] + phosphate. With respect to regulation, activated by arachidonic acid. Its function is as follows. May function as a protein phosphatase. The chain is Serine/threonine-protein phosphatase T from Trypanosoma brucei brucei (strain 927/4 GUTat10.1).